A 340-amino-acid polypeptide reads, in one-letter code: MASQIAQLLEKALHFWNAVPQPLQYTFAALGALYVLRGALSFVRLLLNSFILSGPNLRKYGKKGTWAVVTGASDGLGKEFASQLASKGFNLVLVSRTQSKLDALAKELRLKWSGLETKVLAMDFSQDNDEDYERLAKLIAGLDVGILINNVGQSHSIPVSFLDTEKTELQSIVTINCLGTLKTTKVVAPILAARKKGLILTMGSFAGTMPTPYLATYSGSKAFLQHWSSSLASELAPHGVDVQFVISYLVTTAMSKVRRTSLLIPGPKQFVKAALGKIGLDSNENFPNTYTPWWSHNVFKWIIDSTVGNTSAFTIWQNRKMHVDIRNRALRKAAREAKKQ.

A helical membrane pass occupies residues 23-43 (LQYTFAALGALYVLRGALSFV). NADP(+) is bound by residues valine 68, arginine 109, aspartate 123, aspartate 131, asparagine 150, lysine 185, tyrosine 217, lysine 221, valine 250, and threonine 252. The active-site Proton donor is tyrosine 217. The Lowers pKa of active site Tyr role is filled by lysine 221.

This sequence belongs to the short-chain dehydrogenases/reductases (SDR) family.

Its subcellular location is the endoplasmic reticulum membrane. It catalyses the reaction a very-long-chain (3R)-3-hydroxyacyl-CoA + NADP(+) = a very-long-chain 3-oxoacyl-CoA + NADPH + H(+). It functions in the pathway lipid metabolism; fatty acid biosynthesis. Component of the microsomal membrane bound fatty acid elongation system, which produces the 26-carbon very long-chain fatty acids (VLCFA) from palmitate. Catalyzes the reduction of the 3-ketoacyl-CoA intermediate that is formed in each cycle of fatty acid elongation. VLCFAs serve as precursors for ceramide and sphingolipids. The chain is Very-long-chain 3-oxoacyl-CoA reductase from Podospora anserina (strain S / ATCC MYA-4624 / DSM 980 / FGSC 10383) (Pleurage anserina).